Consider the following 716-residue polypeptide: Phospholipid phosphatase-related protein type 3 (716 aa).

3 helical membrane-spanning segments follow: residues 18–38 (LPCFYFVELPIVASSVVSLYF), 70–90 (LIPLLMLLSLAFAAPAASIMV), and 131–151 (FVGVHVFGLCATALVTDVIQL). N167 carries an N-linked (GlcNAc...) asparagine glycan. Transmembrane regions (helical) follow at residues 205–225 (HATLSAFAAVYVSMYFNSVIS), 231–251 (LKPILVFAFAIAAGVCGLTQI), and 261–281 (VYAGFLIGAGIAAYLACHAVG). Positions 311-334 (SMYQQNKSVSTDELGPPGRLEGVP) are disordered. Over residues 312-321 (MYQQNKSVST) the composition is skewed to polar residues. The N-linked (GlcNAc...) asparagine glycan is linked to N316. S320 and S351 each carry phosphoserine. Phosphothreonine is present on T374. The disordered stretch occupies residues 416–488 (GRGLGLPDEA…RVILPPRPGP (73 aa)). Residue S426 is modified to Phosphoserine. The segment covering 437-460 (VAEEEEEEEEEEEEEEEEEEEEEG) has biased composition (acidic residues). Position 506 is a phosphoserine (S506). Residues 548–589 (AMSKAAGGPKAETASSSSASSDSSQYRSPSDRDSASIVTIDA) form a disordered region. Positions 562 to 575 (SSSSASSDSSQYRS) are enriched in low complexity. Position 641 is a phosphoserine (S641). The segment at 664-694 (GEGLPPPGASEGALGAGSRESTLRRQVGALG) is disordered.

This sequence belongs to the PA-phosphatase related phosphoesterase family.

Its subcellular location is the membrane. The sequence is that of Phospholipid phosphatase-related protein type 3 from Rattus norvegicus (Rat).